A 248-amino-acid chain; its full sequence is DNA polymerase sliding clamp 2 (248 aa).

Belongs to the PCNA family. Homotrimer. The subunits circularize to form a toroid; DNA passes through its center. Replication factor C (RFC) is required to load the toroid on the DNA.

Its function is as follows. Sliding clamp subunit that acts as a moving platform for DNA processing. Responsible for tethering the catalytic subunit of DNA polymerase and other proteins to DNA during high-speed replication. This is DNA polymerase sliding clamp 2 from Sulfurisphaera ohwakuensis.